Consider the following 510-residue polypeptide: Ectonucleoside triphosphate diphosphohydrolase 1 (510 aa).

Residues 1 to 16 are Cytoplasmic-facing; that stretch reads MEDRRESELKTFCSKN. The chain crosses the membrane as a helical span at residues 17–37; that stretch reads ILVILGFSSIIAVIALLALGL. Residues 38-477 lie on the Extracellular side of the membrane; sequence TQNKPLPENV…SSTRLSHSTY (440 aa). N-linked (GlcNAc...) asparagine glycosylation occurs at asparagine 73. A disulfide bridge links cysteine 84 with cysteine 108. Glutamate 174 acts as the Proton acceptor in catalysis. Residues asparagine 245, asparagine 274, asparagine 291, and asparagine 333 are each glycosylated (N-linked (GlcNAc...) asparagine). 2 disulfides stabilise this stretch: cysteine 255/cysteine 300 and cysteine 281/cysteine 324. A disulfide bridge connects residues cysteine 337 and cysteine 342. N-linked (GlcNAc...) asparagine glycosylation occurs at asparagine 370. Cysteine 390 and cysteine 413 are joined by a disulfide. Asparagine 457 carries N-linked (GlcNAc...) asparagine glycosylation. Residues 478-498 traverse the membrane as a helical segment; the sequence is VFLMVLFSLILVIVVIIGLFV. The Cytoplasmic portion of the chain corresponds to 499–510; sequence CHRPSYFWKDMV.

The protein belongs to the GDA1/CD39 NTPase family. In terms of assembly, homodimer; disulfide-linked. Ca(2+) serves as cofactor. Mg(2+) is required as a cofactor. N-glycosylated. In terms of processing, cleaved into two polypeptides that seem to stay together by non-covalent interactions. Post-translationally, the N-terminus is blocked. Palmitoylated on Cys-13; which is required for caveola targeting. In terms of tissue distribution, highest expression found in vascular endothelium, smooth muscle, spleen and lung (at protein level). High expression also found in stomach, duodenum, kidney, lymph node and aorta (at protein level).

The protein localises to the membrane. Its subcellular location is the caveola. The catalysed reaction is a ribonucleoside 5'-triphosphate + 2 H2O = a ribonucleoside 5'-phosphate + 2 phosphate + 2 H(+). It carries out the reaction a ribonucleoside 5'-triphosphate + H2O = a ribonucleoside 5'-diphosphate + phosphate + H(+). The enzyme catalyses a ribonucleoside 5'-diphosphate + H2O = a ribonucleoside 5'-phosphate + phosphate + H(+). It catalyses the reaction ATP + 2 H2O = AMP + 2 phosphate + 2 H(+). The catalysed reaction is ATP + H2O = ADP + phosphate + H(+). It carries out the reaction ADP + H2O = AMP + phosphate + H(+). The enzyme catalyses CTP + 2 H2O = CMP + 2 phosphate + 2 H(+). It catalyses the reaction CTP + H2O = CDP + phosphate + H(+). The catalysed reaction is CDP + H2O = CMP + phosphate + H(+). It carries out the reaction GTP + 2 H2O = GMP + 2 phosphate + 2 H(+). The enzyme catalyses GTP + H2O = GDP + phosphate + H(+). It catalyses the reaction GDP + H2O = GMP + phosphate + H(+). The catalysed reaction is ITP + 2 H2O = IMP + 2 phosphate + 2 H(+). It carries out the reaction ITP + H2O = IDP + phosphate + H(+). The enzyme catalyses IDP + H2O = IMP + phosphate + H(+). It catalyses the reaction UTP + 2 H2O = UMP + 2 phosphate + 2 H(+). The catalysed reaction is UTP + H2O = UDP + phosphate + H(+). It carries out the reaction UDP + H2O = UMP + phosphate + H(+). With respect to regulation, the ATP diphosphohydrolase activity is decreased by half by sodium azide. In terms of biological role, catalyzes the hydrolysis of both di- and triphosphate nucleotides (NDPs and NTPs) and hydrolyze NTPs to nucleotide monophosphates (NMPs) in two distinct successive phosphate-releasing steps, with NDPs as intermediates and participates in the regulation of extracellular levels of nucleotides. By hydrolyzing proinflammatory ATP and platelet-activating ADP to AMP, it blocks platelet aggregation and supports blood flow. The protein is Ectonucleoside triphosphate diphosphohydrolase 1 of Sus scrofa (Pig).